A 108-amino-acid polypeptide reads, in one-letter code: Insulin-like peptide 17 (108 aa).

Residues Met1–Ala19 form the signal peptide.

It belongs to the insulin family. Expressed in head neurons and the uterus.

The protein resides in the secreted. Functionally, involved in the regulation of the larval diapause. The chain is Insulin-like peptide 17 from Caenorhabditis elegans.